Reading from the N-terminus, the 367-residue chain is Aminomethyltransferase (367 aa).

Belongs to the GcvT family. As to quaternary structure, the glycine cleavage system is composed of four proteins: P, T, L and H.

The enzyme catalyses N(6)-[(R)-S(8)-aminomethyldihydrolipoyl]-L-lysyl-[protein] + (6S)-5,6,7,8-tetrahydrofolate = N(6)-[(R)-dihydrolipoyl]-L-lysyl-[protein] + (6R)-5,10-methylene-5,6,7,8-tetrahydrofolate + NH4(+). In terms of biological role, the glycine cleavage system catalyzes the degradation of glycine. This chain is Aminomethyltransferase, found in Parasynechococcus marenigrum (strain WH8102).